Consider the following 693-residue polypeptide: Elongation factor G (693 aa).

Residues E8–L282 enclose the tr-type G domain. GTP-binding positions include A17–T24, D81–H85, and N135–D138.

The protein belongs to the TRAFAC class translation factor GTPase superfamily. Classic translation factor GTPase family. EF-G/EF-2 subfamily.

Its subcellular location is the cytoplasm. Functionally, catalyzes the GTP-dependent ribosomal translocation step during translation elongation. During this step, the ribosome changes from the pre-translocational (PRE) to the post-translocational (POST) state as the newly formed A-site-bound peptidyl-tRNA and P-site-bound deacylated tRNA move to the P and E sites, respectively. Catalyzes the coordinated movement of the two tRNA molecules, the mRNA and conformational changes in the ribosome. The polypeptide is Elongation factor G (Streptococcus pneumoniae (strain P1031)).